The chain runs to 200 residues: 3-isopropylmalate dehydratase small subunit (200 aa).

It belongs to the LeuD family. LeuD type 1 subfamily. In terms of assembly, heterodimer of LeuC and LeuD.

The enzyme catalyses (2R,3S)-3-isopropylmalate = (2S)-2-isopropylmalate. It participates in amino-acid biosynthesis; L-leucine biosynthesis; L-leucine from 3-methyl-2-oxobutanoate: step 2/4. Catalyzes the isomerization between 2-isopropylmalate and 3-isopropylmalate, via the formation of 2-isopropylmaleate. The chain is 3-isopropylmalate dehydratase small subunit from Actinobacillus succinogenes (strain ATCC 55618 / DSM 22257 / CCUG 43843 / 130Z).